Consider the following 307-residue polypeptide: Aspartate carbamoyltransferase catalytic subunit (307 aa).

The carbamoyl phosphate site is built by Arg59 and Thr60. Lys87 contributes to the L-aspartate binding site. Positions 109, 137, and 140 each coordinate carbamoyl phosphate. Residues Arg173 and Arg223 each contribute to the L-aspartate site. Carbamoyl phosphate-binding residues include Gly266 and Pro267.

It belongs to the aspartate/ornithine carbamoyltransferase superfamily. ATCase family. Heterododecamer (2C3:3R2) of six catalytic PyrB chains organized as two trimers (C3), and six regulatory PyrI chains organized as three dimers (R2).

The enzyme catalyses carbamoyl phosphate + L-aspartate = N-carbamoyl-L-aspartate + phosphate + H(+). It functions in the pathway pyrimidine metabolism; UMP biosynthesis via de novo pathway; (S)-dihydroorotate from bicarbonate: step 2/3. Its function is as follows. Catalyzes the condensation of carbamoyl phosphate and aspartate to form carbamoyl aspartate and inorganic phosphate, the committed step in the de novo pyrimidine nucleotide biosynthesis pathway. The polypeptide is Aspartate carbamoyltransferase catalytic subunit (Helicobacter pylori (strain Shi470)).